A 234-amino-acid chain; its full sequence is MTKIAMANFKSAMPVFKSHAYLKELEKTLKPQHFDRVFVFPDFLGLLPNSFLHFTLGAQNAYPRDCGAFTGEITSKHLEELKIHTLLIGHSERRALLKESPSFLKEKFGFFKDKNFKIVYCIGEELTTREKGFRAVKEFLNEQLENIDLNYSNLIVAYEPIWAIGTKKSASLEDIYLTHGFLKQILNQKTPLLYGGSVNVQNAKEILGIDSVDGLLIGSASWELENFKTIISFL.

A substrate-binding site is contributed by 8–10 (NFK). His-90 serves as the catalytic Electrophile. Glu-159 functions as the Proton acceptor in the catalytic mechanism. Positions 165 and 197 each coordinate substrate.

This sequence belongs to the triosephosphate isomerase family. In terms of assembly, homodimer.

The protein localises to the cytoplasm. It catalyses the reaction D-glyceraldehyde 3-phosphate = dihydroxyacetone phosphate. The protein operates within carbohydrate biosynthesis; gluconeogenesis. It functions in the pathway carbohydrate degradation; glycolysis; D-glyceraldehyde 3-phosphate from glycerone phosphate: step 1/1. In terms of biological role, involved in the gluconeogenesis. Catalyzes stereospecifically the conversion of dihydroxyacetone phosphate (DHAP) to D-glyceraldehyde-3-phosphate (G3P). The sequence is that of Triosephosphate isomerase from Helicobacter pylori (strain G27).